A 313-amino-acid chain; its full sequence is Protein FixB (313 aa).

255–283 is a binding site for FAD; sequence LYLAVGISGQIQHMVGANASQTIFAINKD.

Belongs to the ETF alpha-subunit/FixB family. Heterodimer of FixA and FixB.

Its pathway is amine and polyamine metabolism; carnitine metabolism. Functionally, required for anaerobic carnitine reduction. May bring reductant to CaiA. This is Protein FixB from Escherichia coli O8 (strain IAI1).